The chain runs to 726 residues: Ribonuclease R (726 aa).

An RNB domain is found at Arg-262–Leu-590. The S1 motif domain maps to Gly-642–Tyr-723.

This sequence belongs to the RNR ribonuclease family. RNase R subfamily. As to quaternary structure, monomer.

It localises to the cytoplasm. The catalysed reaction is Exonucleolytic cleavage in the 3'- to 5'-direction to yield nucleoside 5'-phosphates.. In terms of biological role, 3'-5' exoribonuclease that releases 5'-nucleoside monophosphates and is involved in maturation of structured RNAs. The protein is Ribonuclease R of Buchnera aphidicola subsp. Schizaphis graminum (strain Sg).